Here is a 460-residue protein sequence, read N- to C-terminus: uncharacterized protein (460 aa).

One can recognise a TRAM domain in the interval 6–64; that stretch reads PVKKNSTYNLYITGMGTKGEGIGKINNFTIFVTGAILGEEVEVNIIKVNKNYAVGKLLN. [4Fe-4S] cluster-binding residues include Cys-77, Cys-83, Cys-86, and Cys-163. S-adenosyl-L-methionine contacts are provided by Gln-287, Tyr-316, Glu-337, and Asp-385. The active-site Nucleophile is the Cys-412.

This sequence belongs to the class I-like SAM-binding methyltransferase superfamily. RNA M5U methyltransferase family.

This is an uncharacterized protein from Clostridium tetani (strain Massachusetts / E88).